Reading from the N-terminus, the 368-residue chain is Phosphate acyltransferase (368 aa).

The disordered stretch occupies residues 334 to 368 (AAPLGESGRDADGAGQASPSAGQPAEPSAALSSKT).

It belongs to the PlsX family. As to quaternary structure, homodimer. Probably interacts with PlsY.

The protein localises to the cytoplasm. It catalyses the reaction a fatty acyl-[ACP] + phosphate = an acyl phosphate + holo-[ACP]. The protein operates within lipid metabolism; phospholipid metabolism. Catalyzes the reversible formation of acyl-phosphate (acyl-PO(4)) from acyl-[acyl-carrier-protein] (acyl-ACP). This enzyme utilizes acyl-ACP as fatty acyl donor, but not acyl-CoA. This chain is Phosphate acyltransferase, found in Burkholderia thailandensis (strain ATCC 700388 / DSM 13276 / CCUG 48851 / CIP 106301 / E264).